Here is a 395-residue protein sequence, read N- to C-terminus: Probable beta-1,3-galactosyltransferase 8 (395 aa).

The chain crosses the membrane as a helical; Signal-anchor for type II membrane protein span at residues Ala-5–Ser-27. A glycan (N-linked (GlcNAc...) asparagine) is linked at Asn-117.

The protein belongs to the glycosyltransferase 31 family. Mn(2+) serves as cofactor.

The protein resides in the golgi apparatus membrane. It functions in the pathway protein modification; protein glycosylation. In terms of biological role, beta-1,3-galactosyltransferase that transfers galactose from UDP-galactose to substrates with a terminal glycosyl residue. In Arabidopsis thaliana (Mouse-ear cress), this protein is Probable beta-1,3-galactosyltransferase 8 (B3GALT8).